We begin with the raw amino-acid sequence, 844 residues long: MDAAALQYENQKLVQQLEAQKSKMRALEGKFKELRDEQCSYDNTLICLNKMWNQLIDDLVLLGVRAGGDLNGLQALDHEEMSEESLESCPSEEIFLFRLLNSRNFRNNDDSSLSKLVEEALALRYSTTVTLMKSLQEAFAVQQARSESLSLALNGQNSSEDVIVALENHNDYLKEVVDNLRQAVSIINRKHEKYLDEIEAFKNNQSRELHEVKCLSGELEESMAELEESRRKLAVLQLQTGGGSLMNTSAPNGVNGSVSTDKSSDKGMGWRDLKDAVEEAKTLAANRLFELHETQEDNLILSKQLEDIQDQLKDENYIVTSKPYTILSDQLHHLNAEIERYRGLVEVLQNEKDQLMQKEEEMLAKAESVDAVQQSITTYKAKIEDLEHEIQKLMAEKNDLEIKAEEALQDSGKKDFKDEIHVMAASLSKEMELLDNQMNRSKDAASEALALREEADYLRTLLAKKIDEQKEISDRYNTQVTEIKSLKALIETLDQEKQELQFIVDMLGKECSESRAISEIEESENRARKQAEYLRKCLEEHNLELRVKAANEAETACQQRLSIAEAELEDLRAKVDASERDVMKLKESIRIKEAEVDGHISEIETIGQAYEDMQTQNQHLLQQVADRDDFNIKLVSDSVKMKQAYGSLLAEKNMLQKQLQHVNSSLESSKLKITSGEEQMKTYVAQAMKSSSENRHLAISLERTMLEVSDAEKELKWLRSATGSAEKEYEINQKKIAELKMELERERNERIKLEEEYEEVKNEVSELTSETEETTIQKLQDEIKECKAILKCGVCFDRPKEVVITKCFHLFCSPCIQRNLEIRHRKCPGCGTPFGQSDVREVKI.

2 coiled-coil regions span residues 1-38 (MDAAALQYENQKLVQQLEAQKSKMRALEGKFKELRDEQ) and 160-240 (EDVI…QLQT). The disordered stretch occupies residues 244-269 (SLMNTSAPNGVNGSVSTDKSSDKGMG). The span at 245–261 (LMNTSAPNGVNGSVSTD) shows a compositional bias: polar residues. Coiled coils occupy residues 290 to 604 (ELHE…SEIE) and 640 to 670 (KMKQAYGSLLAEKNMLQKQLQHVNSSLESSK). An RING-type zinc finger spans residues 792–831 (CGVCFDRPKEVVITKCFHLFCSPCIQRNLEIRHRKCPGCG).

It belongs to the BRE1 family.

It is found in the nucleus. It carries out the reaction S-ubiquitinyl-[E2 ubiquitin-conjugating enzyme]-L-cysteine + [acceptor protein]-L-lysine = [E2 ubiquitin-conjugating enzyme]-L-cysteine + N(6)-ubiquitinyl-[acceptor protein]-L-lysine.. Its pathway is protein modification; protein ubiquitination. E3 ubiquitin-protein ligase that monoubiquitinates H2B to form H2BK143ub1. H2BK143ub1 gives a specific tag for epigenetic transcriptional activation and is also prerequisite for H3K4me and maybe H3K79me. It thereby plays a central role in histone code and gene regulation. Forms a ubiquitin ligase complex in cooperation with the E2 enzyme UBC2/RAD6. The chain is E3 ubiquitin-protein ligase BRE1-like 2 (BRE1B) from Oryza sativa subsp. indica (Rice).